A 324-amino-acid polypeptide reads, in one-letter code: Beta-ketoacyl-[acyl-carrier-protein] synthase III (324 aa).

Catalysis depends on residues Cys113 and His251. The interval 252–256 (QANKR) is ACP-binding. Residue Asn281 is part of the active site.

It belongs to the thiolase-like superfamily. FabH family. As to quaternary structure, homodimer.

It localises to the cytoplasm. It carries out the reaction malonyl-[ACP] + acetyl-CoA + H(+) = 3-oxobutanoyl-[ACP] + CO2 + CoA. Its pathway is lipid metabolism; fatty acid biosynthesis. Functionally, catalyzes the condensation reaction of fatty acid synthesis by the addition to an acyl acceptor of two carbons from malonyl-ACP. Catalyzes the first condensation reaction which initiates fatty acid synthesis and may therefore play a role in governing the total rate of fatty acid production. Possesses both acetoacetyl-ACP synthase and acetyl transacylase activities. Its substrate specificity determines the biosynthesis of branched-chain and/or straight-chain of fatty acids. This chain is Beta-ketoacyl-[acyl-carrier-protein] synthase III, found in Bartonella tribocorum (strain CIP 105476 / IBS 506).